Reading from the N-terminus, the 411-residue chain is Citrate synthase (411 aa).

Active-site residues include histidine 304 and aspartate 363.

Belongs to the citrate synthase family.

It catalyses the reaction oxaloacetate + acetyl-CoA + H2O = citrate + CoA + H(+). It functions in the pathway carbohydrate metabolism; tricarboxylic acid cycle; isocitrate from oxaloacetate: step 1/2. This Rickettsia massiliae protein is Citrate synthase (gltA).